A 264-amino-acid polypeptide reads, in one-letter code: Undecaprenyl-diphosphatase (264 aa).

A run of 7 helical transmembrane segments spans residues 42-62, 82-102, 109-129, 146-166, 184-204, 215-235, and 243-263; these read ESLL…LVVF, TQFS…GLLF, LFGG…LLLW, AFII…RSGA, FSFL…LMSG, ILAT…TWMI, and LSWF…FAYA.

The protein belongs to the UppP family.

It localises to the cell membrane. It catalyses the reaction di-trans,octa-cis-undecaprenyl diphosphate + H2O = di-trans,octa-cis-undecaprenyl phosphate + phosphate + H(+). Its function is as follows. Catalyzes the dephosphorylation of undecaprenyl diphosphate (UPP). Confers resistance to bacitracin. This chain is Undecaprenyl-diphosphatase, found in Christiangramia forsetii (strain DSM 17595 / CGMCC 1.15422 / KT0803) (Gramella forsetii).